The sequence spans 148 residues: Glutamyl-tRNA(Gln) amidotransferase subunit C, mitochondrial (148 aa).

It belongs to the GatC family. Subunit of the heterotrimeric GatCAB amidotransferase (AdT) complex, composed of A, B and C subunits.

It localises to the mitochondrion. It catalyses the reaction L-glutamyl-tRNA(Gln) + L-glutamine + ATP + H2O = L-glutaminyl-tRNA(Gln) + L-glutamate + ADP + phosphate + H(+). Functionally, allows the formation of correctly charged Gln-tRNA(Gln) through the transamidation of misacylated Glu-tRNA(Gln) in the mitochondria. The reaction takes place in the presence of glutamine and ATP through an activated gamma-phospho-Glu-tRNA(Gln). This is Glutamyl-tRNA(Gln) amidotransferase subunit C, mitochondrial from Drosophila yakuba (Fruit fly).